The following is an 809-amino-acid chain: MESAGTGRSLRTPPPRLLLLLLLQVAGPAGALAETLLNAPKAMGTSSSPLSPASVVAPGTTAFEESRLPVFTLDYPHVQIPFEITLWILLASLAKIGFHLYHKLPTIVPESCLLIMVGLLLGGIIFGVDEKSPPAMKTDVFFLYLLPPIVLDAGYFMPTRPFFENLGTIFWYAVVGTLWNSIGIGVSLFGICQIEAFGLSDITLLQNLLFGSLISAVDPVAVLAVFENIHVNEQLYILVFGESLLNDAVTVVLYNLFKSFCQMKTIETIDVFAGIANFFVVGIGGVLIGIFLGFIAAFTTRFTHNIRVIEPLFVFLYSYLSYITAEMFHLSGIMAITACAMTMNKYVEENVSQKSYTTIKYFMKMLSSVSETLIFIFMGVSTVGKNHEWNWAFVCFTLAFCLIWRALGVFVLTRVINWFRTIPLTFKDQFIIAYGGLRGAICFALVFLLPAAVFPRKKLFITAAIVVIFFTVFILGITIRPLVEFLDVKRSNKKQQAVSEEIHCRFFDHVKTGIEDVCGHWGHNFWRDKFKKFDDKYLRKLLIRENQPKSSIVSLYKKLEIKHAIEMAETGMISTVPSFASLNDCREEKIRKLTPGEMDEIREILSRNLYQIRQRTLSYNRHNLTADTSERQAKEILIRRRHSLRESIRKDNSLNRERRASTSTSRYLSLPKNTKLPEKLQKRKNISNADGDSSDSEADAGTTVLNLQPRARRFLPEPFSKKASQAYKMEWKNEVDAGSGQGQPSPPAAPRSKEGGTQTPAVLRQPLLSKDQGREDSLTEGGRPKPPPRLVRRASEPGNRKSRLGSDKP.

Transmembrane regions (helical) follow at residues 107–127 (IVPESCLLIMVGLLLGGIIFG), 138–158 (TDVFFLYLLPPIVLDAGYFMP), 169–189 (IFWYAVVGTLWNSIGIGVSLF), 209–229 (LFGSLISAVDPVAVLAVFENI), 237–257 (ILVFGESLLNDAVTVVLYNLF), 278–298 (FFVVGIGGVLIGIFLGFIAAF), and 308–328 (VIEPLFVFLYSYLSYITAEMF). Asparagine 350 carries an N-linked (GlcNAc...) asparagine glycan. Helical transmembrane passes span 361–381 (YFMKMLSSVSETLIFIFMGVS), 392–412 (AFVCFTLAFCLIWRALGVFVL), 430–450 (FIIAYGGLRGAICFALVFLLP), and 459–479 (LFITAAIVVIFFTVFILGITI). Composition is skewed to basic and acidic residues over residues 648-660 (IRKDNSLNRERRA) and 793-809 (RASEPGNRKSRLGSDKP). 2 disordered regions span residues 648–700 (IRKD…EADA) and 734–809 (EVDA…SDKP).

The protein belongs to the monovalent cation:proton antiporter 1 (CPA1) transporter (TC 2.A.36) family. In terms of assembly, interacts with CHP1 and CHP2. As to expression, high levels in intestine and kidney. Strongly expressed in gastric epithelial cells, with particularly high expression levels in mucous cells.

It is found in the apical cell membrane. The enzyme catalyses Na(+)(in) + H(+)(out) = Na(+)(out) + H(+)(in). Plasma membrane Na(+)/H(+) antiporter. Mediates the electroneutral exchange of intracellular H(+) ions for extracellular Na(+). Major apical Na(+)/H(+) exchanger in the base of the colonic crypt. Controls in the colonic crypt intracellular pH (pHi) to direct colonic epithelial cell differentiation into the absorptive enterocyte lineage at the expense of the secretory lineage. This Oryctolagus cuniculus (Rabbit) protein is Sodium/hydrogen exchanger 2 (SLC9A2).